Reading from the N-terminus, the 255-residue chain is Uridylate kinase (255 aa).

The segment at 1–21 (MSAAAAGRGERLNHAGNPGHR) is disordered. ATP is bound at residue 30 to 33 (KLGG). Residue G71 participates in UMP binding. ATP is bound by residues G72 and R76. Residues D91 and 152 to 159 (MGLPYFST) each bind UMP. ATP-binding residues include F185 and D188.

Belongs to the UMP kinase family. In terms of assembly, homohexamer.

The protein resides in the cytoplasm. It carries out the reaction UMP + ATP = UDP + ADP. It functions in the pathway pyrimidine metabolism; CTP biosynthesis via de novo pathway; UDP from UMP (UMPK route): step 1/1. With respect to regulation, inhibited by UTP. Its function is as follows. Catalyzes the reversible phosphorylation of UMP to UDP. The sequence is that of Uridylate kinase from Mycobacterium leprae (strain TN).